A 170-amino-acid polypeptide reads, in one-letter code: Peptide deformylase (170 aa).

Fe cation contacts are provided by Cys91 and His133. Glu134 is an active-site residue. His137 is a binding site for Fe cation.

It belongs to the polypeptide deformylase family. It depends on Fe(2+) as a cofactor.

The enzyme catalyses N-terminal N-formyl-L-methionyl-[peptide] + H2O = N-terminal L-methionyl-[peptide] + formate. In terms of biological role, removes the formyl group from the N-terminal Met of newly synthesized proteins. Requires at least a dipeptide for an efficient rate of reaction. N-terminal L-methionine is a prerequisite for activity but the enzyme has broad specificity at other positions. The chain is Peptide deformylase from Yersinia pseudotuberculosis serotype O:1b (strain IP 31758).